A 1241-amino-acid chain; its full sequence is Intraflagellar transport protein 122 homolog (1241 aa).

WD repeat units follow at residues 10–50, 51–91, 93–129, and 131–169; these read KAEH…QPLK, GHKD…LKYT, NDAI…VSKH, and SSSK…KVKI. Residues 222 to 246 form a disordered region; sequence VYSSQGSEAEEEEPEEEDDSPRDDN. Residues 229–242 show a composition bias toward acidic residues; the sequence is EAEEEEPEEEDDSP. WD repeat units lie at residues 278 to 317, 319 to 359, and 512 to 551; these read ALNF…LGTV, EQNS…HGLY, and KQAT…LLFQ.

As to quaternary structure, component of the IFT complex A (IFT-A) complex. IFT-A complex is divided into a core subcomplex composed of IFT122:IFT140:WDR19 which is associated with TULP3 and a peripheral subcomplex composed of IFT43:WDR35:TTC21B. Interacts with IFT43:WDR35; the interaction connects the 2 IFT-A subcomplexes. Interacts with IFTAP; the interaction associates IFTAP with IFT-A complex. As to expression, expressed in many tissues. Predominant expression in testis and pituitary.

Its subcellular location is the cell projection. The protein resides in the cilium. It is found in the cytoplasm. The protein localises to the cytoskeleton. It localises to the cilium basal body. Functionally, as a component of the IFT complex A (IFT-A), a complex required for retrograde ciliary transport and entry into cilia of G protein-coupled receptors (GPCRs), it is required in ciliogenesis and ciliary protein trafficking. Involved in cilia formation during neuronal patterning. Acts as a negative regulator of Shh signaling. Required to recruit TULP3 to primary cilia. This chain is Intraflagellar transport protein 122 homolog, found in Homo sapiens (Human).